We begin with the raw amino-acid sequence, 218 residues long: N-(5'-phosphoribosyl)anthranilate isomerase (218 aa).

It belongs to the TrpF family.

It carries out the reaction N-(5-phospho-beta-D-ribosyl)anthranilate = 1-(2-carboxyphenylamino)-1-deoxy-D-ribulose 5-phosphate. The protein operates within amino-acid biosynthesis; L-tryptophan biosynthesis; L-tryptophan from chorismate: step 3/5. In Stenotrophomonas maltophilia (strain K279a), this protein is N-(5'-phosphoribosyl)anthranilate isomerase.